Consider the following 121-residue polypeptide: Small ribosomal subunit protein uS13 (121 aa).

Residues G94 to K121 form a disordered region. Residues S106–K121 show a composition bias toward basic residues.

It belongs to the universal ribosomal protein uS13 family. Part of the 30S ribosomal subunit. Forms a loose heterodimer with protein S19. Forms two bridges to the 50S subunit in the 70S ribosome.

In terms of biological role, located at the top of the head of the 30S subunit, it contacts several helices of the 16S rRNA. In the 70S ribosome it contacts the 23S rRNA (bridge B1a) and protein L5 of the 50S subunit (bridge B1b), connecting the 2 subunits; these bridges are implicated in subunit movement. Contacts the tRNAs in the A and P-sites. The polypeptide is Small ribosomal subunit protein uS13 (Halalkalibacterium halodurans (strain ATCC BAA-125 / DSM 18197 / FERM 7344 / JCM 9153 / C-125) (Bacillus halodurans)).